The primary structure comprises 514 residues: DNA damage-binding protein CMR1 (514 aa).

The interval 26-116 (NLDSLSQSIK…VKQEEKEELS (91 aa)) is disordered. The span at 34–44 (IKRELPRASET) shows a compositional bias: basic and acidic residues. The span at 45–55 (KKRKTTPRTKA) shows a compositional bias: basic residues. Composition is skewed to basic and acidic residues over residues 56–65 (VKKEDVEPSR) and 92–116 (KFED…EELS). WD repeat units lie at residues 180–221 (ISHT…DDSE), 229–269 (PHGK…STEV), 280–320 (DYAL…KPLK), 327–367 (LHDK…KANA), 385–423 (SSRL…LIPD), 438–481 (GRWV…IAHL), and 483–514 (DSVG…YLFE).

It belongs to the WD repeat DDB2/WDR76 family.

DNA-binding protein that binds to both single- and double-stranded DNA. Binds preferentially to UV-damaged DNA. May be involved in DNA-metabolic processes. In Scheffersomyces stipitis (strain ATCC 58785 / CBS 6054 / NBRC 10063 / NRRL Y-11545) (Yeast), this protein is DNA damage-binding protein CMR1 (PRW1).